Consider the following 103-residue polypeptide: Small ribosomal subunit protein uS10 (103 aa).

Belongs to the universal ribosomal protein uS10 family. Part of the 30S ribosomal subunit.

In terms of biological role, involved in the binding of tRNA to the ribosomes. This Chlorobium limicola (strain DSM 245 / NBRC 103803 / 6330) protein is Small ribosomal subunit protein uS10.